The following is a 403-amino-acid chain: Phosphopentomutase 2 (403 aa).

6 residues coordinate Mn(2+): Asp-13, Asp-298, His-303, Asp-339, His-340, and His-351.

Belongs to the phosphopentomutase family. Requires Mn(2+) as cofactor.

It is found in the cytoplasm. It carries out the reaction 2-deoxy-alpha-D-ribose 1-phosphate = 2-deoxy-D-ribose 5-phosphate. The enzyme catalyses alpha-D-ribose 1-phosphate = D-ribose 5-phosphate. It participates in carbohydrate degradation; 2-deoxy-D-ribose 1-phosphate degradation; D-glyceraldehyde 3-phosphate and acetaldehyde from 2-deoxy-alpha-D-ribose 1-phosphate: step 1/2. Functionally, isomerase that catalyzes the conversion of deoxy-ribose 1-phosphate (dRib-1-P) and ribose 1-phosphate (Rib-1-P) to deoxy-ribose 5-phosphate (dRib-5-P) and ribose 5-phosphate (Rib-5-P), respectively. This is Phosphopentomutase 2 from Streptococcus agalactiae serotype Ia (strain ATCC 27591 / A909 / CDC SS700).